The sequence spans 493 residues: Glutamate--tRNA ligase (493 aa).

A 'HIGH' region motif is present at residues 10 to 20; the sequence is PSPTGTPHVGL. Residues 254 to 258 carry the 'KMSKS' region motif; sequence KLSKR. Position 257 (K257) interacts with ATP.

It belongs to the class-I aminoacyl-tRNA synthetase family. Glutamate--tRNA ligase type 1 subfamily. Monomer.

Its subcellular location is the cytoplasm. The enzyme catalyses tRNA(Glu) + L-glutamate + ATP = L-glutamyl-tRNA(Glu) + AMP + diphosphate. Catalyzes the attachment of glutamate to tRNA(Glu) in a two-step reaction: glutamate is first activated by ATP to form Glu-AMP and then transferred to the acceptor end of tRNA(Glu). This is Glutamate--tRNA ligase from Corynebacterium glutamicum (strain ATCC 13032 / DSM 20300 / JCM 1318 / BCRC 11384 / CCUG 27702 / LMG 3730 / NBRC 12168 / NCIMB 10025 / NRRL B-2784 / 534).